A 675-amino-acid polypeptide reads, in one-letter code: Sodium/myo-inositol cotransporter 2 (675 aa).

The Extracellular segment spans residues 1–27; it reads MESGTSSPQPPQLDPLDAFPQKGLEPG. A helical transmembrane segment spans residues 28–48; it reads DIAVLVLYFLFVLAVGLWSTV. Over 49-65 the chain is Cytoplasmic; that stretch reads KTKRDTVKGYFLAGGDM. The helical transmembrane segment at 66-88 threads the bilayer; sequence VWWPVGASLFASNVGSGHFIGLA. Topologically, residues 89–102 are extracellular; that stretch reads GSGAATGISVSAYE. A helical membrane pass occupies residues 103-123; it reads LNGLFSVLMLAWIFLPIYIAG. Residues 124–135 are Cytoplasmic-facing; the sequence is QVTTMPEYLRKR. The helical transmembrane segment at 136–156 threads the bilayer; sequence FGGIRIPIILAVLYLFIYIFT. Residues 157 to 180 lie on the Extracellular side of the membrane; sequence KISVDMYAGAIFIQQSLHLDLYLA. The helical transmembrane segment at 181-201 threads the bilayer; the sequence is IVGLLAITAVYTVAGGLAAVI. Residues 202–208 are Cytoplasmic-facing; that stretch reads YTDALQT. A helical transmembrane segment spans residues 209–229; sequence LIMLIGALTLMGYSFAAVGGM. Residues 230–272 lie on the Extracellular side of the membrane; the sequence is EGLKEKYFLALASNRSENSSCGLPREDAFHIFRDPLTSDLPWP. Residues 273-293 traverse the membrane as a helical segment; it reads GVLFGMSIPSLWYWCTDQVIV. Over 294–308 the chain is Cytoplasmic; sequence QRTLAAKNLSHAKGG. A helical membrane pass occupies residues 309-329; the sequence is ALMAAYLKVLPLFIMVFPGMV. At 330–375 the chain is on the extracellular side; it reads SRILFPDQVACADPEICQKICSNPSGCSDIAYPKLVLELLPTGLRG. The helical transmembrane segment at 376–396 threads the bilayer; the sequence is LMMAVMVAALMSSLTSIFNSA. Residues 397-418 lie on the Cytoplasmic side of the membrane; sequence STIFTMDLWNHLRPRASEKELM. Residues 419–439 form a helical membrane-spanning segment; the sequence is IVGRVFVLLLVLVSILWIPVV. Residues 440 to 446 lie on the Extracellular side of the membrane; the sequence is QASQGGQ. The chain crosses the membrane as a helical span at residues 447 to 467; that stretch reads LFIYIQSISSYLQPPVAVVFI. Residues 468-479 lie on the Cytoplasmic side of the membrane; that stretch reads MGCFWKRTNEKG. Residues 480–500 traverse the membrane as a helical segment; the sequence is AFWGLISGLLLGLVRLVLDFI. Residues 501-521 are Extracellular-facing; it reads YVQPRCDQPDERPVLVKSIHY. A helical transmembrane segment spans residues 522–542; sequence LYFSMILSTVTLITVSTVSWF. The Cytoplasmic portion of the chain corresponds to 543–654; that stretch reads TEPPSKEMVS…SLEENPLVKT (112 aa). The helical transmembrane segment at 655–675 threads the bilayer; sequence LLDVNLIFCVSCAIFIWGYFA.

It belongs to the sodium:solute symporter (SSF) (TC 2.A.21) family. Highest expression in heart, skeletal muscle, kidney, liver and placenta. Weaker expression in brain, colon, spleen, lung and peripheral blood leukocytes.

It localises to the membrane. Its subcellular location is the apical cell membrane. The enzyme catalyses myo-inositol(out) + 2 Na(+)(out) = myo-inositol(in) + 2 Na(+)(in). It carries out the reaction 1D-chiro-inositol(out) + 2 Na(+)(out) = 1D-chiro-inositol(in) + 2 Na(+)(in). It catalyses the reaction D-glucose(out) + 2 Na(+)(out) = D-glucose(in) + 2 Na(+)(in). The catalysed reaction is D-xylose(out) + 2 Na(+)(out) = D-xylose(in) + 2 Na(+)(in). Its activity is regulated as follows. MI transport activity inhibited by D-chiro-inositol (DCI), phlorizin (Pz) and sodium (Na(+)). Insulin increases D-chiro-inositol uptake. Its function is as follows. Involved in the sodium-dependent cotransport of myo-inositol (MI) with a Na(+):MI stoichiometry of 2:1. Exclusively responsible for apical MI transport and absorption in intestine. Can also transport D-chiro-inositol (DCI) but not L-fucose. Exhibits stereospecific cotransport of both D-glucose and D-xylose. May induce apoptosis through the TNF-alpha, PDCD1 pathway. May play a role in the regulation of MI concentration in serum, involving reabsorption in at least the proximal tubule of the kidney. The protein is Sodium/myo-inositol cotransporter 2 of Homo sapiens (Human).